The chain runs to 306 residues: Protease HtpX homolog (306 aa).

Transmembrane regions (helical) follow at residues 10–30 (TTLLFALMWAIIMLIWWATGG) and 33–53 (QTLSIYIVIGLITTFGTYWFS). His135 is a Zn(2+) binding site. Glu136 is a catalytic residue. His139 serves as a coordination point for Zn(2+). Helical transmembrane passes span 149–169 (AIASAMATVISYLGYSLMYFG) and 181–201 (GLGLIGALLSVILAPIAASLI). Glu210 is a Zn(2+) binding site.

The protein belongs to the peptidase M48B family. The cofactor is Zn(2+).

The protein resides in the cell membrane. The protein is Protease HtpX homolog of Bifidobacterium longum (strain NCC 2705).